A 306-amino-acid chain; its full sequence is Methionyl-tRNA formyltransferase (306 aa).

108–111 (SLLP) provides a ligand contact to (6S)-5,6,7,8-tetrahydrofolate.

The protein belongs to the Fmt family.

It catalyses the reaction L-methionyl-tRNA(fMet) + (6R)-10-formyltetrahydrofolate = N-formyl-L-methionyl-tRNA(fMet) + (6S)-5,6,7,8-tetrahydrofolate + H(+). Functionally, attaches a formyl group to the free amino group of methionyl-tRNA(fMet). The formyl group appears to play a dual role in the initiator identity of N-formylmethionyl-tRNA by promoting its recognition by IF2 and preventing the misappropriation of this tRNA by the elongation apparatus. In Pseudarthrobacter chlorophenolicus (strain ATCC 700700 / DSM 12829 / CIP 107037 / JCM 12360 / KCTC 9906 / NCIMB 13794 / A6) (Arthrobacter chlorophenolicus), this protein is Methionyl-tRNA formyltransferase.